Reading from the N-terminus, the 304-residue chain is N-acetylmuramic acid 6-phosphate etherase (304 aa).

In terms of domain architecture, SIS spans 62-225; sequence IVEAFQQGGR…TTASMILIGK (164 aa). The active-site Proton donor is the E90. E121 is an active-site residue.

This sequence belongs to the GCKR-like family. MurNAc-6-P etherase subfamily. Homodimer.

It catalyses the reaction N-acetyl-D-muramate 6-phosphate + H2O = N-acetyl-D-glucosamine 6-phosphate + (R)-lactate. It functions in the pathway amino-sugar metabolism; 1,6-anhydro-N-acetylmuramate degradation. Its pathway is amino-sugar metabolism; N-acetylmuramate degradation. The protein operates within cell wall biogenesis; peptidoglycan recycling. In terms of biological role, specifically catalyzes the cleavage of the D-lactyl ether substituent of MurNAc 6-phosphate, producing GlcNAc 6-phosphate and D-lactate. Together with AnmK, is also required for the utilization of anhydro-N-acetylmuramic acid (anhMurNAc) either imported from the medium or derived from its own cell wall murein, and thus plays a role in cell wall recycling. This Glaesserella parasuis serovar 5 (strain SH0165) (Haemophilus parasuis) protein is N-acetylmuramic acid 6-phosphate etherase.